The chain runs to 547 residues: Glucose-6-phosphate isomerase (547 aa).

Residue Glu351 is the Proton donor of the active site. Residues His382 and Lys510 contribute to the active site.

Belongs to the GPI family.

The protein localises to the cytoplasm. The catalysed reaction is alpha-D-glucose 6-phosphate = beta-D-fructose 6-phosphate. Its pathway is carbohydrate biosynthesis; gluconeogenesis. The protein operates within carbohydrate degradation; glycolysis; D-glyceraldehyde 3-phosphate and glycerone phosphate from D-glucose: step 2/4. Functionally, catalyzes the reversible isomerization of glucose-6-phosphate to fructose-6-phosphate. The protein is Glucose-6-phosphate isomerase of Beijerinckia indica subsp. indica (strain ATCC 9039 / DSM 1715 / NCIMB 8712).